The sequence spans 386 residues: Succinate--CoA ligase [ADP-forming] subunit beta (386 aa).

The 236-residue stretch at 9–244 (KEVLRKYGVV…LDEEDADEIE (236 aa)) folds into the ATP-grasp domain. ATP is bound by residues Lys-46, 53–55 (GRG), Glu-99, Ala-102, and Glu-107. Asn-199 and Asp-213 together coordinate Mg(2+). Substrate contacts are provided by residues Asn-264 and 321–323 (GIM).

The protein belongs to the succinate/malate CoA ligase beta subunit family. In terms of assembly, heterotetramer of two alpha and two beta subunits. The cofactor is Mg(2+).

It catalyses the reaction succinate + ATP + CoA = succinyl-CoA + ADP + phosphate. The enzyme catalyses GTP + succinate + CoA = succinyl-CoA + GDP + phosphate. It participates in carbohydrate metabolism; tricarboxylic acid cycle; succinate from succinyl-CoA (ligase route): step 1/1. Succinyl-CoA synthetase functions in the citric acid cycle (TCA), coupling the hydrolysis of succinyl-CoA to the synthesis of either ATP or GTP and thus represents the only step of substrate-level phosphorylation in the TCA. The beta subunit provides nucleotide specificity of the enzyme and binds the substrate succinate, while the binding sites for coenzyme A and phosphate are found in the alpha subunit. The protein is Succinate--CoA ligase [ADP-forming] subunit beta of Azoarcus sp. (strain BH72).